The sequence spans 642 residues: Nocturnin (642 aa).

The tract at residues 50–87 (LEDDDKPPQLFSVTDEPPSPNEEDYKPPNHHEDDGKLA) is disordered. Over residues 72-87 (EDYKPPNHHEDDGKLA) the composition is skewed to basic and acidic residues. Glutamate 363 contacts Mg(2+). Substrate is bound by residues glutamate 363, asparagine 430, 453 to 456 (HLKA), 491 to 493 (DFN), and histidine 600. A disordered region spans residues 611–642 (PPTENGKESGSGSGSDGENETEVEGSKHGSIQ).

This sequence belongs to the CCR4/nocturin family. In terms of assembly, associates to the CCR4-NOT complex composed of at least Pop2/Caf1-55, Ccr4, Not1, Rga/Not2, and Not3. Mg(2+) serves as cofactor. In terms of tissue distribution, expressed in the head, in the dorsal neurons DN3, a subgroup of clock neurons (at protein level). Ubiquitously expressed in both males and females.

It localises to the cytoplasm. The enzyme catalyses NADP(+) + H2O = phosphate + NAD(+). It catalyses the reaction NADPH + H2O = phosphate + NADH. In terms of biological role, phosphatase which catalyzes the conversion of NADP(+) to NAD(+) and of NADPH to NADH. Shows a small preference for NADPH over NADP(+). Because of its association with the CCR4-NOT complex, has a role in mRNA deadenylation and decay. Required at the pupal stage for proper wing morphogenesis after eclosion. Doesn't have a role in light-mediated behavioral response. Functionally, in dorsal neurons, contributes to the light-mediated behavioral response. This Drosophila melanogaster (Fruit fly) protein is Nocturnin.